Reading from the N-terminus, the 1459-residue chain is DNA-binding protein RFX7 (1459 aa).

Positions 1-27 are disordered; it reads MAEEQQQPPPQQLDAPQQLPLSAPNPG. Low complexity predominate over residues 12–21; sequence QLDAPQQLPL. Residues 108–183 constitute a DNA-binding region (RFX-type winged-helix); the sequence is AFSWIRNTLE…YCYSGLRKKA (76 aa). A PxLPxI/L motif; mediates interaction with ANKRA2 and RFXANK motif is present at residues 188 to 193; sequence PTLPNL. Disordered regions lie at residues 303-347, 404-428, 482-590, 634-659, 688-716, and 918-1016; these read AKQQ…LPNG, SVKQ…ARHR, PSNS…GVTE, FTST…SPRK, GQKP…AQIP, and SVTP…VPPS. 2 stretches are compositionally biased toward polar residues: residues 404-416 and 482-502; these read SVKQ…QNVP and PSNS…TGTT. Positions 521–534 are enriched in low complexity; it reads SPGSRASSTGGTSA. The segment covering 537–549 has biased composition (basic and acidic residues); it reads VKMEPEGSSDEHP. 3 stretches are compositionally biased toward polar residues: residues 562–578, 634–645, and 706–716; these read PLTT…NTDG, FTSTSSPSNGDS, and TESSTAGAQIP. Positions 947-963 are enriched in pro residues; sequence TPTPTPTPTPTPTPTPT. The span at 971 to 1009 shows a compositional bias: polar residues; sequence GSQSLSRESPCSRLAQTTPVDSALGSSRHTPIGTPHSNC.

Belongs to the RFX family. Interacts (via PxLPxI/L motif) with RFXANK (via ankyrin repeats). Interacts (via PxLPxI/L motif) with ANKRA2 (via ankyrin repeats). Expressed in spleen and lymph node and to a lower extend in brain (at protein level). Expressed in lymphoid organs and lymphoid cell subsets. Expressed throughout natural killer (NK) cell maturation.

The protein resides in the nucleus. In terms of biological role, transcription factor. Acts as a transcriptional activator by binding to promoter regions of target genes, such as Rec8, Mxd4 and Ddit4. Plays a role in natural killer (NK) cell maintenance and immunity. May play a role in the process of ciliogenesis in the neural tube and neural tube closure. This chain is DNA-binding protein RFX7, found in Mus musculus (Mouse).